We begin with the raw amino-acid sequence, 122 residues long: Large ribosomal subunit protein uL18 (122 aa).

Basic residues predominate over residues 1–19; that stretch reads MSTLSRKQKTQKRHKRLRR. Residues 1–26 are disordered; sequence MSTLSRKQKTQKRHKRLRRNLSGTDQ.

It belongs to the universal ribosomal protein uL18 family. As to quaternary structure, part of the 50S ribosomal subunit; part of the 5S rRNA/L5/L18/L25 subcomplex. Contacts the 5S and 23S rRNAs.

Its function is as follows. This is one of the proteins that bind and probably mediate the attachment of the 5S RNA into the large ribosomal subunit, where it forms part of the central protuberance. The sequence is that of Large ribosomal subunit protein uL18 from Prochlorococcus marinus (strain SARG / CCMP1375 / SS120).